Consider the following 466-residue polypeptide: Ribulose bisphosphate carboxylase large chain (466 aa).

Lysine 5 bears the N6,N6,N6-trimethyllysine mark. Asparagine 114 and threonine 164 together coordinate substrate. Lysine 166 serves as the catalytic Proton acceptor. Residue lysine 168 participates in substrate binding. Mg(2+)-binding residues include lysine 192, aspartate 194, and glutamate 195. Lysine 192 is modified (N6-carboxylysine). Histidine 285 (proton acceptor) is an active-site residue. The substrate site is built by arginine 286, histidine 318, and serine 370.

The protein belongs to the RuBisCO large chain family. Type I subfamily. Heterohexadecamer of 8 large chains and 8 small chains; disulfide-linked. The disulfide link is formed within the large subunit homodimers. The cofactor is Mg(2+). The disulfide bond which can form in the large chain dimeric partners within the hexadecamer appears to be associated with oxidative stress and protein turnover.

The protein localises to the plastid. It localises to the chloroplast. It catalyses the reaction 2 (2R)-3-phosphoglycerate + 2 H(+) = D-ribulose 1,5-bisphosphate + CO2 + H2O. The enzyme catalyses D-ribulose 1,5-bisphosphate + O2 = 2-phosphoglycolate + (2R)-3-phosphoglycerate + 2 H(+). Functionally, ruBisCO catalyzes two reactions: the carboxylation of D-ribulose 1,5-bisphosphate, the primary event in carbon dioxide fixation, as well as the oxidative fragmentation of the pentose substrate in the photorespiration process. Both reactions occur simultaneously and in competition at the same active site. The chain is Ribulose bisphosphate carboxylase large chain from Poliothyrsis sinensis (Chinese pearlbloom tree).